The primary structure comprises 1247 residues: E3 ubiquitin-protein ligase hecw-1 (1247 aa).

One can recognise a WW 1 domain in the interval 602-635 (TPPESHWKTYLDAKKRKFYVNHVTKETRWTKPDT). A disordered region spans residues 633–659 (PDTLNNNHIEPETPVHKRLSDRSASPR). Positions 641–653 (IEPETPVHKRLSD) are enriched in basic and acidic residues. The 33-residue stretch at 745 to 777 (QPLPSGWECITMNNRTVFLNHANKETSFYDPRI) folds into the WW 2 domain. The HECT domain maps to 914–1247 (DPFVLKKSRL…IVNGMSYSIE (334 aa)). Cysteine 1215 functions as the Glycyl thioester intermediate in the catalytic mechanism.

Expressed in the nervous system throughout the body. In the anterior ganglion, expression is limited to the two lateral outer labial neurons OLLL and OLLR.

It is found in the cytoplasm. It catalyses the reaction S-ubiquitinyl-[E2 ubiquitin-conjugating enzyme]-L-cysteine + [acceptor protein]-L-lysine = [E2 ubiquitin-conjugating enzyme]-L-cysteine + N(6)-ubiquitinyl-[acceptor protein]-L-lysine.. It participates in protein modification; protein ubiquitination. Functionally, E3 ubiquitin-protein ligase. Functions in the OLL neurons in the anterior ganglion to inhibit avoidance to microbial pathogens such as P.aeruginosa although worms do display avoidance behavior, vacating a P.aeruginosa lawn within 24 hours. Likely to act by inhibiting the neuropeptide receptor npr-1. The chain is E3 ubiquitin-protein ligase hecw-1 from Caenorhabditis elegans.